We begin with the raw amino-acid sequence, 599 residues long: Serine/threonine-protein kinase Nek1 (599 aa).

Residues 4-258 form the Protein kinase domain; that stretch reads YEVLEQIGKG…AAELLKHPHL (255 aa). Residues 10-18 and Lys-33 each bind ATP; that span reads IGKGAFGSA. Asp-129 serves as the catalytic Proton acceptor. 3 disordered regions span residues 364–386, 461–482, and 504–542; these read SIVK…EPPK, SEDP…PQHC, and DDDD…DTSS. Over residues 511 to 530 the composition is skewed to low complexity; that stretch reads DSSSGRNNAAAAASSRAGSS.

It belongs to the protein kinase superfamily. NEK Ser/Thr protein kinase family. NIMA subfamily. Expressed in anthers, pistils and leaves.

It catalyses the reaction L-seryl-[protein] + ATP = O-phospho-L-seryl-[protein] + ADP + H(+). The catalysed reaction is L-threonyl-[protein] + ATP = O-phospho-L-threonyl-[protein] + ADP + H(+). May be involved in plant development processes. The chain is Serine/threonine-protein kinase Nek1 from Oryza sativa subsp. japonica (Rice).